Consider the following 112-residue polypeptide: Putative membrane protein insertion efficiency factor (112 aa).

This sequence belongs to the UPF0161 family.

It is found in the cell inner membrane. Its function is as follows. Could be involved in insertion of integral membrane proteins into the membrane. The protein is Putative membrane protein insertion efficiency factor of Bradyrhizobium diazoefficiens (strain JCM 10833 / BCRC 13528 / IAM 13628 / NBRC 14792 / USDA 110).